The following is a 426-amino-acid chain: Gamma-glutamyl phosphate reductase (426 aa).

This sequence belongs to the gamma-glutamyl phosphate reductase family.

The protein resides in the cytoplasm. The catalysed reaction is L-glutamate 5-semialdehyde + phosphate + NADP(+) = L-glutamyl 5-phosphate + NADPH + H(+). Its pathway is amino-acid biosynthesis; L-proline biosynthesis; L-glutamate 5-semialdehyde from L-glutamate: step 2/2. In terms of biological role, catalyzes the NADPH-dependent reduction of L-glutamate 5-phosphate into L-glutamate 5-semialdehyde and phosphate. The product spontaneously undergoes cyclization to form 1-pyrroline-5-carboxylate. This is Gamma-glutamyl phosphate reductase from Cupriavidus taiwanensis (strain DSM 17343 / BCRC 17206 / CCUG 44338 / CIP 107171 / LMG 19424 / R1) (Ralstonia taiwanensis (strain LMG 19424)).